The sequence spans 243 residues: MNWSDDGIVLGGRRFGEGGLILDVLTREKGRRSGLVYGGASRRKRAQFEAGNTIALSWTGRLDDQLGRFDVAEARKDRASRLLDDPAALAALSAITSLLRGGLNEGDAAGSSLYEATTLLLDQLTEPNVWPALYVRWELGLLSALGFGLDLDECAVSGANDGLTHVSPRTGRAVRGSEAEPYVDRLFALPSFLIDPRADVLPGDIAAGLRLTGYFIEGRLFGSVHRGLPPERERLLKRITPPA.

The protein belongs to the RecO family.

Functionally, involved in DNA repair and RecF pathway recombination. The polypeptide is DNA repair protein RecO (Hyphomonas neptunium (strain ATCC 15444)).